A 508-amino-acid chain; its full sequence is Probable monogalactosyldiacylglycerol synthase 3, chloroplastic (508 aa).

A chloroplast-targeting transit peptide spans 1 to 60 (MAASSSSSSSMASPRGRSIRETVLETVAAYHQQQRMRRKFRKSLSYAGELSSAGRARGEG). A disordered region spans residues 51 to 79 (SSAGRARGEGGASSSASTTSLCGPDEDDE).

The protein belongs to the glycosyltransferase 28 family.

It is found in the plastid. The protein localises to the chloroplast membrane. It carries out the reaction a 1,2-diacyl-sn-glycerol + UDP-alpha-D-galactose = a 1,2-diacyl-3-O-(beta-D-galactosyl)-sn-glycerol + UDP + H(+). Involved in the synthesis of the major structural component of photosynthetic membranes. The protein is Probable monogalactosyldiacylglycerol synthase 3, chloroplastic (MGD3) of Oryza sativa subsp. japonica (Rice).